A 306-amino-acid chain; its full sequence is Acetyl-coenzyme A carboxylase carboxyl transferase subunit beta (306 aa).

The CoA carboxyltransferase N-terminal domain maps to 25-294 (LWIKDPTSGE…VVNPSNTSST (270 aa)). Low complexity predominate over residues 287–296 (NPSNTSSTNS). A disordered region spans residues 287–306 (NPSNTSSTNSQASLSKAEAA).

Belongs to the AccD/PCCB family. In terms of assembly, acetyl-CoA carboxylase is a heterohexamer composed of biotin carboxyl carrier protein (AccB), biotin carboxylase (AccC) and two subunits each of ACCase subunit alpha (AccA) and ACCase subunit beta (AccD).

Its subcellular location is the cytoplasm. It catalyses the reaction N(6)-carboxybiotinyl-L-lysyl-[protein] + acetyl-CoA = N(6)-biotinyl-L-lysyl-[protein] + malonyl-CoA. It functions in the pathway lipid metabolism; malonyl-CoA biosynthesis; malonyl-CoA from acetyl-CoA: step 1/1. In terms of biological role, component of the acetyl coenzyme A carboxylase (ACC) complex. Biotin carboxylase (BC) catalyzes the carboxylation of biotin on its carrier protein (BCCP) and then the CO(2) group is transferred by the transcarboxylase to acetyl-CoA to form malonyl-CoA. This Bartonella henselae (strain ATCC 49882 / DSM 28221 / CCUG 30454 / Houston 1) (Rochalimaea henselae) protein is Acetyl-coenzyme A carboxylase carboxyl transferase subunit beta.